We begin with the raw amino-acid sequence, 319 residues long: Transcription initiation factor IIB 6 (319 aa).

The segment covering 1–16 (MTDARMRSREQERTDE) has biased composition (basic and acidic residues). Residues 1 to 33 (MTDARMRSREQERTDETESESTDGCPECGGLVV) form a disordered region. The segment at 21–51 (STDGCPECGGLVVNDEEHGESVCADCGLVVE) adopts a TFIIB-type zinc-finger fold. Zn(2+)-binding residues include Cys-25, Cys-28, Cys-43, and Cys-46. Residues 59–74 (PEWRAFDSKEKDEKSR) show a composition bias toward basic and acidic residues. The segment at 59–89 (PEWRAFDSKEKDEKSRVGAPTTNTMHDKGLS) is disordered. Repeat copies occupy residues 137-220 (GEID…VREL) and 231-312 (SYVP…ELLE).

The protein belongs to the TFIIB family.

Its function is as follows. Stabilizes TBP binding to an archaeal box-A promoter. Also responsible for recruiting RNA polymerase II to the pre-initiation complex (DNA-TBP-TFIIB). The sequence is that of Transcription initiation factor IIB 6 from Halobacterium salinarum (strain ATCC 700922 / JCM 11081 / NRC-1) (Halobacterium halobium).